A 50-amino-acid chain; its full sequence is Defensin D2 (50 aa).

Cystine bridges form between Cys-3-Cys-50, Cys-14-Cys-35, Cys-20-Cys-44, and Cys-24-Cys-46.

In terms of processing, contains 4 disulfide bonds.

The protein localises to the secreted. Functionally, antimicrobial peptide active against fungi, Gram-positive and Gram-negative bacteria. Inhibits growth of hyphae in the fungi A.niger (IC(50)=3.5 ug/ml), B.sorokiniana (IC(50)=1.8 ug/ml), F.oxysporum (IC(50)=5.3 ug/ml), F.graminearum (IC(50)=6.9 ug/ml), F.culmorum (IC(50)=6.9 ug/ml) and B.cinerea (IC(50)=13.7 ug/ml). Has no effect on spore germination. Destroys spores in germinated conidia by disruption of cell walls and membranes in A.niger and B.sorokiniana. Causes vacuolization of germinated macro- and microconidia in F.oxysporum, F.graminearum and F.culmorum. Strongly inhibits growth of P.infestans on potato tubers above concentrations of 3.4 ug/ml. Inhibits growth of Gram-positive bacteria C.michiganensis and B.subtilis and of Gram-negative bacteria P.syringae, E.carotovora and E.coli. The polypeptide is Defensin D2 (Nigella sativa (Black cumin)).